The primary structure comprises 130 residues: Small ribosomal subunit protein uS9 (130 aa).

The protein belongs to the universal ribosomal protein uS9 family.

This is Small ribosomal subunit protein uS9 from Methylibium petroleiphilum (strain ATCC BAA-1232 / LMG 22953 / PM1).